Here is a 95-residue protein sequence, read N- to C-terminus: Small ribosomal subunit protein uS19 (95 aa).

Residues 73-95 are disordered; sequence EFSPTRTYRGHGADKNAKGSKKK.

The protein belongs to the universal ribosomal protein uS19 family.

Functionally, protein S19 forms a complex with S13 that binds strongly to the 16S ribosomal RNA. This is Small ribosomal subunit protein uS19 from Deinococcus radiodurans (strain ATCC 13939 / DSM 20539 / JCM 16871 / CCUG 27074 / LMG 4051 / NBRC 15346 / NCIMB 9279 / VKM B-1422 / R1).